We begin with the raw amino-acid sequence, 444 residues long: Probable D-serine dehydratase (444 aa).

N6-(pyridoxal phosphate)lysine is present on lysine 118.

The protein belongs to the serine/threonine dehydratase family. DsdA subfamily. It depends on pyridoxal 5'-phosphate as a cofactor.

It catalyses the reaction D-serine = pyruvate + NH4(+). This chain is Probable D-serine dehydratase, found in Acinetobacter baumannii (strain ACICU).